The sequence spans 327 residues: Biotin synthase (327 aa).

The region spanning 49 to 282 (FNKEKIDLCS…KKVIRLCGGR (234 aa)) is the Radical SAM core domain. [4Fe-4S] cluster is bound by residues Cys67, Cys71, and Cys74. [2Fe-2S] cluster is bound by residues Ser110, Cys142, Cys201, and Arg277.

It belongs to the radical SAM superfamily. Biotin synthase family. In terms of assembly, homodimer. The cofactor is [4Fe-4S] cluster. Requires [2Fe-2S] cluster as cofactor.

It carries out the reaction (4R,5S)-dethiobiotin + (sulfur carrier)-SH + 2 reduced [2Fe-2S]-[ferredoxin] + 2 S-adenosyl-L-methionine = (sulfur carrier)-H + biotin + 2 5'-deoxyadenosine + 2 L-methionine + 2 oxidized [2Fe-2S]-[ferredoxin]. Its pathway is cofactor biosynthesis; biotin biosynthesis; biotin from 7,8-diaminononanoate: step 2/2. Its function is as follows. Catalyzes the conversion of dethiobiotin (DTB) to biotin by the insertion of a sulfur atom into dethiobiotin via a radical-based mechanism. The protein is Biotin synthase of Methanococcus maripaludis (strain C7 / ATCC BAA-1331).